A 388-amino-acid chain; its full sequence is Pregnancy-associated glycoprotein (388 aa).

Positions 1–15 (MKWFGVLGLVTLSEC) are cleaved as a signal peptide. The Peptidase A1 domain occupies 74-385 (YMGIISVGTP…DRENDRIGLA (312 aa)). Residue aspartate 92 is part of the active site. 2 cysteine pairs are disulfide-bonded: cysteine 105-cysteine 110 and cysteine 266-cysteine 270. The active site involves aspartate 275. A disulfide bridge links cysteine 309 with cysteine 344. A glycan (N-linked (GlcNAc...) asparagine) is linked at asparagine 356.

Belongs to the peptidase A1 family. In terms of tissue distribution, trophoblast and placental tissue.

The protein resides in the secreted. It is found in the extracellular space. The polypeptide is Pregnancy-associated glycoprotein (PAG) (Equus caballus (Horse)).